Consider the following 189-residue polypeptide: Interferon alpha-B (189 aa).

The signal sequence occupies residues 1 to 23 (MAPAWSFLLALLLLSCNAICSLG). Cystine bridges form between Cys24–Cys122 and Cys52–Cys162.

The protein belongs to the alpha/beta interferon family.

Its subcellular location is the secreted. In terms of biological role, produced by macrophages, IFN-alpha have antiviral activities. Interferon stimulates the production of two enzymes: a protein kinase and an oligoadenylate synthetase. The sequence is that of Interferon alpha-B (IFNAB) from Bos taurus (Bovine).